A 366-amino-acid polypeptide reads, in one-letter code: MNKKKVALLFGGRSSEHEISVISARSIANALDKTKYKIQPIYITKAGKWLGAEASRKILAMDFESAIKSPTKKEIHLIEKEIVLLCQNSQFRFDFRTAKIDVAFPVLHGPYGEDGTVQGLLEMFDVAYVGSGVLASAITMDKAVAKICFEHAGLQVGEYLAFLRREFEENRGSVVARAEKKLRYPMFVKPANMGSSVGISKAHNRNELIEAIELALAYDRKFLIEKAINAREMEVAVLGNDEPIASAVGEVVPCNEFYDYDAKYVKGSSEVIIPAQISEAFAGKLKAAALNAFVAADCEGMARVDFLVEKETNEIYINEINSIPGFTSISMYPKLFAQVGISYTELINRLIELALERYSERKLRKI.

Positions 146-352 constitute an ATP-grasp domain; that stretch reads KICFEHAGLQ…YTELINRLIE (207 aa). 179–234 is a binding site for ATP; sequence EKKLRYPMFVKPANMGSSVGISKAHNRNELIEAIELALAYDRKFLIEKAINAREME. Residues Asp-305, Glu-319, and Asn-321 each contribute to the Mg(2+) site.

The protein belongs to the D-alanine--D-alanine ligase family. Mg(2+) is required as a cofactor. Requires Mn(2+) as cofactor.

The protein localises to the cytoplasm. The enzyme catalyses 2 D-alanine + ATP = D-alanyl-D-alanine + ADP + phosphate + H(+). The protein operates within cell wall biogenesis; peptidoglycan biosynthesis. Functionally, cell wall formation. The polypeptide is D-alanine--D-alanine ligase (Chloroherpeton thalassium (strain ATCC 35110 / GB-78)).